Here is a 400-residue protein sequence, read N- to C-terminus: Tryptophan--tRNA ligase (400 aa).

The short motif at 12–20 (PTGALHLGH) is the 'HIGH' region element. The tract at residues 173–241 (REPGFEQKAL…RLFGYLEGAR (69 aa)) is insert. Residues 265–269 (KMSKS) carry the 'KMSKS' region motif. Lysine 268 lines the ATP pocket. The tract at residues 280 to 305 (KASVEKKVRTMPTDPARVRRTDPGDP) is disordered. Basic and acidic residues predominate over residues 295-304 (ARVRRTDPGD).

It belongs to the class-I aminoacyl-tRNA synthetase family. As to quaternary structure, homodimer.

Its subcellular location is the cytoplasm. The enzyme catalyses tRNA(Trp) + L-tryptophan + ATP = L-tryptophyl-tRNA(Trp) + AMP + diphosphate + H(+). This Ralstonia nicotianae (strain ATCC BAA-1114 / GMI1000) (Ralstonia solanacearum) protein is Tryptophan--tRNA ligase (trpS).